Here is a 476-residue protein sequence, read N- to C-terminus: MALKDTGSGGSTILPISEMVSASSSPGAPLAAAPGPCAPSPFPEVVELNVGGQVYVTKHSTLLSVPDSTLASMFSPSSPRGGARRRGDLPRDSRARFFIDRDGFLFRYVLDYLRDKQLALPEHFPEKERLLREAEFFQLTDLVKLLSPKVTKQNSLNDECCQSDLEDNVSQGSSDALLLRGAAAGAPSGSGAHGVSGVVGGGSAPDKRSGFLTLGYRGSYTTVRDNQADAKFRRVARIMVCGRIALAKEVFGDTLNESRDPDRQPEKYTSRFYLKFTYLEQAFDRLSEAGFHMVACNSSGTAAFVNQYRDDKIWSSYTEYIFFRPPQKIVSPKQEHEDRKRDKVTDKGSESGTSCNELSTSSCDSHSEASTPQDNPANTQQAAAHQPNTLTLDRPSRKAPVQWMPPPDKRRNSELFQSLISKSRETNLSKKKVCEKLSVEEEMKKCIQDFKKIHIPDCFPERKRQWQSELLQKYGL.

Residues 44–122 (EVVELNVGGQ…LRDKQLALPE (79 aa)) enclose the BTB domain. At S78 the chain carries Phosphoserine. Residue R80 is modified to Omega-N-methylarginine. The segment at 331–412 (SPKQEHEDRK…WMPPPDKRRN (82 aa)) is disordered. A compositionally biased stretch (basic and acidic residues) spans 333-349 (KQEHEDRKRDKVTDKGS). Over residues 350 to 391 (ESGTSCNELSTSSCDSHSEASTPQDNPANTQQAAAHQPNTLT) the composition is skewed to polar residues. Position 413 is a phosphoserine (S413).

As to quaternary structure, interacts as a tetramer with GABBR1 and GABBR2.

Its subcellular location is the presynaptic cell membrane. The protein resides in the postsynaptic cell membrane. Functionally, auxiliary subunit of GABA-B receptors that determine the pharmacology and kinetics of the receptor response. Increases agonist potency and markedly alter the G-protein signaling of the receptors by accelerating onset and promoting desensitization. This is BTB/POZ domain-containing protein KCTD8 (Kctd8) from Mus musculus (Mouse).